The chain runs to 144 residues: Ig heavy chain V region MOPC 141 (144 aa).

An N-terminal signal peptide occupies residues 1-19 (MAVLALLFCLATFPSCILS). The region spanning 20-130 (QVQLKESGPG…YYGRSDKYFT (111 aa)) is the Ig-like domain.

The protein is Ig heavy chain V region MOPC 141 of Mus musculus (Mouse).